Here is a 401-residue protein sequence, read N- to C-terminus: O-methyltransferase SAT18 (401 aa).

Asp249 is a binding site for S-adenosyl-L-methionine. The Proton acceptor role is filled by His300.

This sequence belongs to the class I-like SAM-binding methyltransferase superfamily. Cation-independent O-methyltransferase family.

Its pathway is mycotoxin biosynthesis. Its function is as follows. O-methyltransferase; part of the satratoxin SC3 cluster involved in the biosynthesis of satratoxins, trichothecene mycotoxins that are associated with human food poisonings. Satratoxins are suggested to be made by products of multiple gene clusters (SC1, SC2 and SC3) that encode 21 proteins in all, including polyketide synthases, acetyltransferases, and other enzymes expected to modify the trichothecene skeleton. SC1 encodes 10 proteins, SAT1 to SAT10. The largest are SAT8, which encodes a putative polyketide synthase (PKS) with a conventional non-reducing architecture, and SAT10, a putative protein containing four ankyrin repeats and thus may be involved in protein scaffolding. The putative short-chain reductase SAT3 may assist the PKS in some capacity. SAT6 contains a secretory lipase domain and acts probably as a trichothecene esterase. SAT5 encodes a putative acetyltransferase, and so, with SAT6, may affect endogenous protection from toxicity. The probable transcription factor SAT9 may regulate the expression of the SC1 cluster. SC2 encodes proteins SAT11 to SAT16, the largest of which encodes the putative reducing PKS SAT13. SAT11 is a cytochrome P450 monooxygenase, while SAT14 and SAT16 are probable acetyltransferases. The SC2 cluster may be regulated by the transcription factor SAT15. SC3 is a small cluster that encodes 5 proteins, SAT17 to SAT21. SAT21 is a putative MFS-type transporter which may have a role in exporting secondary metabolites. The four other proteins putatively encoded in SC3 include the taurine hydroxylase-like protein SAT17, the O-methyltransferase SAT18, the acetyltransferase SAT19, and the Cys6-type zinc finger SAT20, the latter being probably involved in regulation of SC3 expression. The chain is O-methyltransferase SAT18 from Stachybotrys chartarum (strain CBS 109288 / IBT 7711) (Toxic black mold).